The following is a 277-amino-acid chain: Large ribosomal subunit protein uL2 (277 aa).

A disordered region spans residues 222–277; that stretch reads GVAMNPVDHPHGGGEGRTSGGRHPVSPWGKPTKGKRTRSNKATDKFIMRTRHQRKK.

The protein belongs to the universal ribosomal protein uL2 family. As to quaternary structure, part of the 50S ribosomal subunit. Forms a bridge to the 30S subunit in the 70S ribosome.

Its function is as follows. One of the primary rRNA binding proteins. Required for association of the 30S and 50S subunits to form the 70S ribosome, for tRNA binding and peptide bond formation. It has been suggested to have peptidyltransferase activity; this is somewhat controversial. Makes several contacts with the 16S rRNA in the 70S ribosome. The polypeptide is Large ribosomal subunit protein uL2 (Bartonella tribocorum (strain CIP 105476 / IBS 506)).